The primary structure comprises 347 residues: 4-hydroxyproline 2-epimerase (347 aa).

A substrate-binding site is contributed by Gln85. The Proton acceptor role is filled by Ser93. Substrate is bound by residues 94-95 (GS) and Asp251. Catalysis depends on Cys255, which acts as the Proton donor. Substrate is bound at residue 256 to 257 (GT).

This sequence belongs to the proline racemase family.

It carries out the reaction trans-4-hydroxy-L-proline = cis-4-hydroxy-D-proline. Catalyzes the epimerization of trans-4-hydroxy-L-proline (t4LHyp) to cis-4-hydroxy-D-proline (c4DHyp). May be involved in a degradation pathway of t4LHyp. Can also catalyze the epimerization of trans-3-hydroxy-L-proline (t3LHyp) to cis-3-hydroxy-D-proline (c3DHyp) in vitro. Displays no proline racemase activity. This Allorhizobium ampelinum (strain ATCC BAA-846 / DSM 112012 / S4) (Agrobacterium vitis (strain S4)) protein is 4-hydroxyproline 2-epimerase.